An 88-amino-acid polypeptide reads, in one-letter code: Alpha-latrotoxin associated low molecular weight protein 2 (88 aa).

Positions 1–19 (MLKLICIAFLVTVLTLVAG) are cleaved as a signal peptide. 3 disulfides stabilise this stretch: C30/C66, C46/C62, and C49/C75.

It belongs to the arthropod CHH/MIH/GIH/VIH hormone family. In terms of tissue distribution, expressed by the venom gland.

Its subcellular location is the secreted. May increase the toxicity of alpha-latrotoxin and/or other venom components. Is non-toxic to mice and to the cockroach Periplaneta americana. This chain is Alpha-latrotoxin associated low molecular weight protein 2, found in Latrodectus hesperus (Western black widow spider).